The chain runs to 146 residues: Hemoglobin subunit beta (146 aa).

An N-acetylvaline modification is found at valine 1. Residues 2-146 form the Globin domain; sequence HLTAEEKSLV…VANALAHKYH (145 aa). Threonine 12 is modified (phosphothreonine). Phosphoserine is present on serine 44. Lysine 59 is modified (N6-acetyllysine). A heme b-binding site is contributed by histidine 63. An N6-acetyllysine modification is found at lysine 82. Histidine 92 lines the heme b pocket. The residue at position 93 (cysteine 93) is an S-nitrosocysteine. The residue at position 144 (lysine 144) is an N6-acetyllysine.

The protein belongs to the globin family. As to quaternary structure, heterotetramer of two alpha chains and two beta chains. As to expression, red blood cells.

Functionally, involved in oxygen transport from the lung to the various peripheral tissues. The polypeptide is Hemoglobin subunit beta (HBB) (Vulpes vulpes (Red fox)).